A 1616-amino-acid chain; its full sequence is S-layer-related protein (1616 aa).

Residues 1–30 (MKSLLRKWNGMMIIALVISLLTPAWGKASA) form the signal peptide. The region spanning 1115–1185 (VKALKLDRGT…GSGTVQATYE (71 aa)) is the BIG2 domain. 4 disordered regions span residues 1191-1244 (ARVS…DGRN), 1372-1455 (NKRN…GRAR), 1523-1554 (ARGRFRNRGVPTRRGADTRTDERDAHARREAG), and 1585-1616 (FAGGGSRPAGRTRGRTLRARPARLPVRKARPC). A compositionally biased stretch (gly residues) spans 1199–1225 (STGGGSDTGSGTGSGSGGGSAGGGGTA). Over residues 1372-1387 (NKRNRRLRKLRPKNRK) the composition is skewed to basic residues. Residues 1406–1416 (PPECSASCPPA) show a composition bias toward low complexity. In terms of domain architecture, SLH spans 1438–1502 (WSPPRSASPT…ALDPAPAAAD (65 aa)). Residues 1536–1554 (RGADTRTDERDAHARREAG) show a composition bias toward basic and acidic residues. Over residues 1594 to 1616 (GRTRGRTLRARPARLPVRKARPC) the composition is skewed to basic residues.

Its subcellular location is the secreted. It localises to the cell wall. It is found in the S-layer. In terms of biological role, the S-layer is a paracrystalline mono-layered assembly of proteins which coats the surface of bacteria. May play a role in the export of butirosin from the organism. This Niallia circulans (Bacillus circulans) protein is S-layer-related protein (butB).